We begin with the raw amino-acid sequence, 417 residues long: GTP-binding protein YPT11 (417 aa).

Residues 1-34 (MSQRKRYSLNVVTSPSIPSPTPSAPIRTNESNWE) are disordered. Residues 97-104 (GDANVGKT), 228-232 (DTAGQ), and 292-295 (NKID) contribute to the GTP site. 2 S-geranylgeranyl cysteine lipidation sites follow: Cys-415 and Cys-416.

This sequence belongs to the small GTPase superfamily. Rab family. In terms of assembly, interacts with MYO2 (via C-terminal tail domain). Interacts with YIF1, YIP3, YIP4 and YIP5.

The protein resides in the endoplasmic reticulum membrane. The protein localises to the bud tip. It is found in the bud neck. Involved in the positive control of both endoplasmic reticulum (ER) and mitochondrion inheritance during cell divison. Required for the MYO2-dependent retention of newly inherited mitochondria at the bud tip in developing daughter cells. The protein is GTP-binding protein YPT11 (YPT11) of Saccharomyces cerevisiae (strain RM11-1a) (Baker's yeast).